The following is a 490-amino-acid chain: Alginate production protein AlgE (490 aa).

An N-terminal signal peptide occupies residues 1 to 32 (MNSSRSVNPRPSFAPRALSLAIALLLGAPAFA). Composition is skewed to polar residues over residues 102–115 (DTLQ…NNSR) and 343–355 (QFQQ…NRSN). Disordered stretches follow at residues 102–121 (DTLQ…GREP) and 331–355 (ARGS…NRSN).

This sequence belongs to the AlgE family.

It localises to the cell outer membrane. Its pathway is glycan biosynthesis; alginate biosynthesis. Its function is as follows. Has non-porin-like, channel-forming properties and probably functions as an alginate permeability pore. This chain is Alginate production protein AlgE (algE), found in Pseudomonas aeruginosa (strain ATCC 15692 / DSM 22644 / CIP 104116 / JCM 14847 / LMG 12228 / 1C / PRS 101 / PAO1).